We begin with the raw amino-acid sequence, 508 residues long: ATP synthase subunit alpha, chloroplastic (508 aa).

Residue 171–178 (GDRQTGKT) participates in ATP binding.

It belongs to the ATPase alpha/beta chains family. F-type ATPases have 2 components, CF(1) - the catalytic core - and CF(0) - the membrane proton channel. CF(1) has five subunits: alpha(3), beta(3), gamma(1), delta(1), epsilon(1). CF(0) has four main subunits: a, b, b' and c.

Its subcellular location is the plastid. It is found in the chloroplast thylakoid membrane. It carries out the reaction ATP + H2O + 4 H(+)(in) = ADP + phosphate + 5 H(+)(out). Functionally, produces ATP from ADP in the presence of a proton gradient across the membrane. The alpha chain is a regulatory subunit. This chain is ATP synthase subunit alpha, chloroplastic, found in Gnetum parvifolium (Small-leaved jointfir).